Consider the following 241-residue polypeptide: MSSLNSVLPSNACAEIIEGKDKVHNVVILMHGLGDSHKSFANMAKNVPLPNTSYISLRGPYRLPLDFENPGGNWMWGEDVHFDQNGELQSEADFSKSFTMISNLIGNLLSYGILSSRIFFFGFGQGAMVALYSCYKLSTKYQLGGIFSFGGTLPLSITLPNHPFHVPVYLFEKRLHCSCSEYEESRLRKTFKPFHLTCWNRDDKTDMPSSPREWYTFVQSISKHLYIHNTLFEDAIPLTSF.

It belongs to the AB hydrolase superfamily. AB hydrolase 2 family.

This is an uncharacterized protein from Schizosaccharomyces pombe (strain 972 / ATCC 24843) (Fission yeast).